The sequence spans 482 residues: Mannan endo-1,4-beta-mannosidase (482 aa).

Positions M1–A21 are cleaved as a signal peptide. A CBM6 domain is found at T42–T160. N-linked (GlcNAc...) asparagine glycosylation is found at N171 and N300. The 294-residue stretch at A181–D474 folds into the GH26 domain. E332 acts as the Proton donor in catalysis. Catalysis depends on E422, which acts as the Nucleophile.

The protein belongs to the glycosyl hydrolase 26 family.

Its subcellular location is the secreted. Its activity is regulated as follows. The activity is completely impaired by Ag(+), partially inhibited by Zn(2+), and enhanced by Co(2+), Ni(2+) and Cu(2+) by 22.6, 14.5 and 20.8 %, respectively. Ca(2+), Na(+), Mg(2+), Mn(2+), urea and EDTA do not significantly affect the mannanase activity. Functionally, mannan endo-1,4-beta-mannosidase that exhibits high activity against konjac glucomannan and carob galactomannan, as well as a lower activity toward beta-mannan. Shows no activity against barley beta-glucan, birchwood xylan, and low viscosity carboxymethyl cellulose (CMC). Has the ability to hydrolyze manno-oligosaccharides such as M4 which is degraded slightly to M3 and M1, M5 which is mainly degraded to M4 and M1, and M6 which is mostly hydrolyzed to M4 and M2. Shows no activity toward M2 and M3 manno-oligosaccharides. The chain is Mannan endo-1,4-beta-mannosidase from Thermothelomyces thermophilus (strain ATCC 42464 / BCRC 31852 / DSM 1799) (Sporotrichum thermophile).